A 170-amino-acid polypeptide reads, in one-letter code: MKKPIEFYLSGDRVYSTREKAINQLYNNRGYGELKGDKLFLSLIEAAYLTEKGWIKVVDKDKELKFDDLMKLGKSRDEDFDIKYIVYKDLRDRGYIVKSALKFGSHYRVYRKDAEHSDWLIWVLRENQRLSPNDITARARVAHGVRKNMVLAIVDEDGDVVYYKVEWIKF.

Catalysis depends on residues Tyr-110, His-116, and Lys-147.

This sequence belongs to the tRNA-intron endonuclease family. Archaeal short subfamily. In terms of assembly, homotetramer; although the tetramer contains four active sites, only two participate in the cleavage. Therefore, it should be considered as a dimer of dimers.

It catalyses the reaction pretRNA = a 3'-half-tRNA molecule with a 5'-OH end + a 5'-half-tRNA molecule with a 2',3'-cyclic phosphate end + an intron with a 2',3'-cyclic phosphate and a 5'-hydroxyl terminus.. Endonuclease that removes tRNA introns. Cleaves pre-tRNA at the 5'- and 3'-splice sites to release the intron. The products are an intron and two tRNA half-molecules bearing 2',3' cyclic phosphate and 5'-OH termini. Recognizes a pseudosymmetric substrate in which 2 bulged loops of 3 bases are separated by a stem of 4 bp. The chain is tRNA-splicing endonuclease from Pyrococcus horikoshii (strain ATCC 700860 / DSM 12428 / JCM 9974 / NBRC 100139 / OT-3).